The primary structure comprises 585 residues: A-type ATP synthase subunit A (585 aa).

The tract at residues 192–211 (MRQEWPVREPRPTVEKKTPR) is disordered. The span at 196–211 (WPVREPRPTVEKKTPR) shows a compositional bias: basic and acidic residues. An ATP-binding site is contributed by 237–244 (GPFGSGKT).

This sequence belongs to the ATPase alpha/beta chains family. As to quaternary structure, has multiple subunits with at least A(3), B(3), C, D, E, F, H, I and proteolipid K(x).

The protein localises to the cell membrane. It catalyses the reaction ATP + H2O + 4 H(+)(in) = ADP + phosphate + 5 H(+)(out). In terms of biological role, component of the A-type ATP synthase that produces ATP from ADP in the presence of a proton gradient across the membrane. The A chain is the catalytic subunit. The sequence is that of A-type ATP synthase subunit A from Haloquadratum walsbyi (strain DSM 16790 / HBSQ001).